We begin with the raw amino-acid sequence, 242 residues long: UPF0246 protein SP_1547 (242 aa).

The protein belongs to the UPF0246 family.

In Streptococcus pneumoniae serotype 4 (strain ATCC BAA-334 / TIGR4), this protein is UPF0246 protein SP_1547.